Consider the following 159-residue polypeptide: Small ribosomal subunit protein uS9 (159 aa).

Belongs to the universal ribosomal protein uS9 family.

The sequence is that of Small ribosomal subunit protein uS9 from Rickettsia africae (strain ESF-5).